The following is a 432-amino-acid chain: CBL-interacting serine/threonine-protein kinase 17 (432 aa).

Positions 11–266 (YELGRTLGEG…IAGIKAHDWF (256 aa)) constitute a Protein kinase domain. ATP is bound by residues 17-25 (LGEGNSAKV) and K40. D134 (proton acceptor) is an active-site residue. The interval 152-181 (DFGLSALSQHYREDGLLHTTCGSPNYVAPE) is activation loop. Residue S156 is modified to Phosphoserine. Position 170 is a phosphothreonine (T170). Residues 301–325 (DSPTIINAFQLIGMSSFLDLSGFFE) enclose the NAF domain. A PPI region spans residues 331-360 (ERQIRFTSNSLAKDLLENIETIFTEMGFCL).

It belongs to the protein kinase superfamily. CAMK Ser/Thr protein kinase family. SNF1 subfamily. As to quaternary structure, interacts with CBL1. Requires Mn(2+) as cofactor.

The enzyme catalyses L-seryl-[protein] + ATP = O-phospho-L-seryl-[protein] + ADP + H(+). It carries out the reaction L-threonyl-[protein] + ATP = O-phospho-L-threonyl-[protein] + ADP + H(+). Its function is as follows. CIPK serine-threonine protein kinases interact with CBL proteins. Binding of a CBL protein to the regulatory NAF domain of CIPK protein lead to the activation of the kinase in a calcium-dependent manner. The chain is CBL-interacting serine/threonine-protein kinase 17 (CIPK17) from Arabidopsis thaliana (Mouse-ear cress).